A 257-amino-acid polypeptide reads, in one-letter code: Major prion protein (257 aa).

Residues Met1–Cys24 form the signal peptide. The tract at residues Lys25 to Ala234 is interaction with GRB2, ERI3 and SYN1. Positions Pro28–Met113 are disordered. Repeat copies occupy residues Pro54 to Gln62, Pro63 to Gln70, Pro71 to Gln78, Pro79 to Gln86, and Pro87 to Gln95. Positions Pro54–Gln95 are 5 X 8 AA tandem repeats of P-H-G-G-G-W-G-Q. The segment covering Gln55–His100 has biased composition (gly residues). Cu(2+)-binding residues include His64, Gly65, Gly66, His72, Gly73, Gly74, His80, Gly81, Gly82, His88, Gly90, and Gly91. A disulfide bond links Cys183 and Cys218. N-linked (GlcNAc...) asparagine glycosylation is found at Asn185 and Asn201. Ala234 carries GPI-anchor amidated alanine lipidation. Positions Ser235–Gly257 are cleaved as a propeptide — removed in mature form.

This sequence belongs to the prion family. As to quaternary structure, monomer and homodimer. Has a tendency to aggregate into amyloid fibrils containing a cross-beta spine, formed by a steric zipper of superposed beta-strands. Soluble oligomers may represent an intermediate stage on the path to fibril formation. Copper binding may promote oligomerization. Interacts with GRB2, APP, ERI3/PRNPIP and SYN1. Mislocalized cytosolically exposed PrP interacts with MGRN1; this interaction alters MGRN1 subcellular location and causes lysosomal enlargement. Interacts with KIAA1191.

It is found in the cell membrane. Its subcellular location is the golgi apparatus. Its function is as follows. Its primary physiological function is unclear. Has cytoprotective activity against internal or environmental stresses. May play a role in neuronal development and synaptic plasticity. May be required for neuronal myelin sheath maintenance. May play a role in iron uptake and iron homeostasis. Soluble oligomers are toxic to cultured neuroblastoma cells and induce apoptosis (in vitro). Association with GPC1 (via its heparan sulfate chains) targets PRNP to lipid rafts. Also provides Cu(2+) or Zn(2+) for the ascorbate-mediated GPC1 deaminase degradation of its heparan sulfate side chains. This Sus scrofa (Pig) protein is Major prion protein (PRNP).